The primary structure comprises 2321 residues: Neurogenic locus notch homolog protein 3 (2321 aa).

Residues Met-1–Pro-14 show a composition bias toward basic residues. The disordered stretch occupies residues Met-1–Ala-26. Residues Met-1–Ala-39 form the signal peptide. The segment covering Met-15–Arg-25 has biased composition (pro residues). 3 consecutive EGF-like domains span residues Ala-40–Gln-77, Leu-78–Ser-118, and Leu-119–Arg-156. Over Ala-40 to Leu-1643 the chain is Extracellular. Intrachain disulfides connect Cys-43-Cys-55, Cys-49-Cys-65, Cys-67-Cys-76, Cys-82-Cys-93, Cys-87-Cys-106, Cys-108-Cys-117, Cys-123-Cys-134, Cys-128-Cys-144, Cys-146-Cys-155, Cys-162-Cys-174, Cys-168-Cys-183, Cys-185-Cys-194, Cys-201-Cys-212, Cys-206-Cys-222, Cys-224-Cys-233, Cys-240-Cys-251, Cys-245-Cys-260, Cys-262-Cys-271, Cys-278-Cys-291, Cys-285-Cys-300, Cys-302-Cys-311, Cys-318-Cys-329, Cys-323-Cys-338, Cys-340-Cys-349, Cys-355-Cys-366, Cys-360-Cys-377, Cys-379-Cys-388, Cys-395-Cys-408, Cys-402-Cys-417, Cys-419-Cys-428, Cys-435-Cys-446, Cys-440-Cys-455, Cys-457-Cys-466, Cys-473-Cys-484, Cys-478-Cys-493, Cys-495-Cys-504, Cys-511-Cys-522, Cys-516-Cys-531, Cys-533-Cys-542, Cys-549-Cys-559, Cys-554-Cys-568, Cys-570-Cys-579, Cys-586-Cys-597, Cys-591-Cys-606, Cys-608-Cys-617, Cys-624-Cys-634, Cys-629-Cys-643, Cys-645-Cys-654, Cys-661-Cys-672, Cys-666-Cys-681, Cys-683-Cys-692, Cys-699-Cys-709, Cys-704-Cys-718, Cys-720-Cys-729, Cys-738-Cys-749, Cys-743-Cys-758, Cys-760-Cys-769, Cys-775-Cys-786, Cys-780-Cys-796, Cys-798-Cys-807, Cys-814-Cys-826, Cys-820-Cys-835, Cys-837-Cys-846, Cys-853-Cys-864, Cys-858-Cys-873, Cys-875-Cys-884, Cys-891-Cys-901, Cys-896-Cys-910, Cys-912-Cys-921, Cys-928-Cys-939, Cys-933-Cys-948, Cys-950-Cys-959, Cys-966-Cys-977, Cys-971-Cys-986, Cys-988-Cys-997, Cys-1004-Cys-1015, Cys-1009-Cys-1022, Cys-1024-Cys-1033, Cys-1040-Cys-1061, Cys-1055-Cys-1070, Cys-1072-Cys-1081, Cys-1088-Cys-1099, Cys-1093-Cys-1108, Cys-1110-Cys-1119, Cys-1126-Cys-1137, Cys-1131-Cys-1146, Cys-1148-Cys-1157, Cys-1164-Cys-1182, Cys-1176-Cys-1191, Cys-1193-Cys-1202, Cys-1209-Cys-1222, Cys-1214-Cys-1232, Cys-1234-Cys-1243, Cys-1250-Cys-1261, Cys-1255-Cys-1275, Cys-1277-Cys-1286, Cys-1293-Cys-1304, Cys-1298-Cys-1313, and Cys-1315-Cys-1324. One can recognise an EGF-like 4; calcium-binding domain in the interval Asp-158–Glu-195. The EGF-like 5 domain maps to Pro-197–Glu-234. The EGF-like 6; calcium-binding domain maps to Asn-236 to Thr-272. Positions Asp-274–Ser-312 constitute an EGF-like 7 domain. One can recognise an EGF-like 8; calcium-binding domain in the interval Asn-314–His-350. The EGF-like 9 domain maps to Leu-351–Asp-389. The EGF-like 10; calcium-binding domain occupies Asp-391 to Glu-429. The region spanning Asp-431–Glu-467 is the EGF-like 11; calcium-binding domain. Positions Asp-469 to Gln-505 constitute an EGF-like 12; calcium-binding domain. The 37-residue stretch at Asp-507–Asp-543 folds into the EGF-like 13; calcium-binding domain. In terms of domain architecture, EGF-like 14; calcium-binding spans Asn-545–Glu-580. The region spanning Gln-582–Glu-618 is the EGF-like 15; calcium-binding domain. Residues Asn-620–Asn-655 form the EGF-like 16; calcium-binding domain. Residues Glu-657–Leu-693 form the EGF-like 17; calcium-binding domain. EGF-like domains lie at Pro-695–Ser-730, Ala-734–Glu-770, and Leu-771–Gln-808. One can recognise an EGF-like 21; calcium-binding domain in the interval Asp-810–Asp-847. The region spanning Asp-849–Ala-885 is the EGF-like 22; calcium-binding domain. In terms of domain architecture, EGF-like 23; calcium-binding spans Asp-887–Glu-922. 5 consecutive EGF-like domains span residues Asp-924–Gln-960, Glu-962–Gln-998, Leu-1000–Asp-1034, Arg-1036–Glu-1082, and Glu-1084–Glu-1120. An EGF-like 29; calcium-binding domain is found at Asp-1122–Glu-1158. Residues Asn-1160–Glu-1203 form the EGF-like 30; calcium-binding domain. Residue Asn-1179 is glycosylated (N-linked (GlcNAc...) asparagine). 4 EGF-like domains span residues Asp-1205–Gln-1244, Val-1246–Glu-1287, Val-1289–Arg-1325, and Ser-1335–Glu-1373. N-linked (GlcNAc...) asparagine glycosylation is present at Asn-1336. Cystine bridges form between Cys-1339–Cys-1350, Cys-1344–Cys-1361, Cys-1363–Cys-1372, Cys-1387–Cys-1410, Cys-1392–Cys-1405, Cys-1401–Cys-1417, Cys-1428–Cys-1451, Cys-1433–Cys-1446, Cys-1442–Cys-1458, Cys-1467–Cys-1493, Cys-1475–Cys-1488, and Cys-1484–Cys-1500. 3 LNR repeats span residues Cys-1387–Gln-1427, Cys-1428–Cys-1458, and Cys-1467–Pro-1505. N-linked (GlcNAc...) asparagine glycosylation occurs at Asn-1438. Residues Leu-1644–Val-1664 form a helical membrane-spanning segment. Topologically, residues Ala-1665 to Ala-2321 are cytoplasmic. 5 ANK repeats span residues Thr-1838–Ala-1867, Ser-1871–Ala-1901, Asp-1905–Ala-1934, Leu-1938–Met-1967, and Lys-1971–Ile-2000. The tract at residues Leu-2024–Gly-2120 is disordered. Residues Leu-2039–Leu-2053 show a composition bias toward low complexity. Arg-2174 is subject to Omega-N-methylarginine. Residues Ala-2190–Ala-2321 form a disordered region. Over residues Ser-2269 to Ala-2289 the composition is skewed to low complexity. Positions Val-2296–Gly-2308 are enriched in polar residues.

This sequence belongs to the NOTCH family. Heterodimer of a C-terminal fragment N(TM) and a N-terminal fragment N(EC) which are probably linked by disulfide bonds. Interacts with MAML1, MAML2 and MAML3 which act as transcriptional coactivators for NOTCH3. Interacts with PSMA1. Interacts with HIF1AN. Synthesized in the endoplasmic reticulum as an inactive form which is proteolytically cleaved by a furin-like convertase in the trans-Golgi network before it reaches the plasma membrane to yield an active, ligand-accessible form. Cleavage results in a C-terminal fragment N(TM) and a N-terminal fragment N(EC). Following ligand binding, it is cleaved by TNF-alpha converting enzyme (TACE) to yield a membrane-associated intermediate fragment called notch extracellular truncation (NEXT). This fragment is then cleaved by presenilin dependent gamma-secretase to release a notch-derived peptide containing the intracellular domain (NICD) from the membrane. Post-translationally, phosphorylated. In terms of processing, hydroxylated by HIF1AN. In terms of tissue distribution, ubiquitously expressed in fetal and adult tissues.

It is found in the cell membrane. The protein localises to the nucleus. Functions as a receptor for membrane-bound ligands Jagged1, Jagged2 and Delta1 to regulate cell-fate determination. Upon ligand activation through the released notch intracellular domain (NICD) it forms a transcriptional activator complex with RBPJ/RBPSUH and activates genes of the enhancer of split locus. Affects the implementation of differentiation, proliferation and apoptotic programs. The chain is Neurogenic locus notch homolog protein 3 (NOTCH3) from Homo sapiens (Human).